Here is a 314-residue protein sequence, read N- to C-terminus: Target of rapamycin complex subunit wat1 (314 aa).

7 WD repeats span residues 1–35, 38–76, 81–120, 122–161, 165–204, 213–252, and 257–296; these read MSVQ…CSRT, HADS…QMPL, GHTN…VQRN, DHKS…CTHE, EEDV…GASL, AHQR…FMLE, and GHQR…TIRQ. Ser-141 is modified (phosphoserine).

It belongs to the WD repeat LST8 family. The target of rapamycin complex 1 (TORC1) is composed of at least mip1, pop3/wat1, tco89, toc1 and tor2. The target of rapamycin complex 2 (TORC2) is composed of at least bit61, pop3/wat1, sin1, ste20 and tor1. Interacts with prp2.

It is found in the cytoplasm. Its subcellular location is the nucleus. In terms of biological role, component of both TORC1 and TORC2, which regulate multiple cellular processes to control cell growth in response to environmental signals. Nutrient limitation and environmental stress signals cause inactivation of TORC1. Active TORC1 positively controls cell growth and ribosome biogenesis by regulating ribosomal protein gene expression. TORC1 negatively controls G1 cell-cycle arrest, sexual development and amino acid uptake. Represses mating, meiosis and sporulation efficiency by interfering with the functions of the transcription factor ste11 and the meiosis-promoting RNA-binding protein mei2. TORC2 is required for cell survival under various stress conditions. TORC2 positively controls G1 cell-cycle arrest, sexual development and amino acid uptake. Positively regulates amino acid uptake through the control of expression of amino acid permeases. May play a role in mRNA maturation as a coupling protein between splicing and synthesis and/or stabilization. In Schizosaccharomyces pombe (strain 972 / ATCC 24843) (Fission yeast), this protein is Target of rapamycin complex subunit wat1.